Here is a 1603-residue protein sequence, read N- to C-terminus: Protein TIC 214 (1603 aa).

6 consecutive transmembrane segments (helical) span residues 11-31 (VLWA…LFGL), 58-78 (LSGT…FLSI), 86-106 (LLLK…FYWY), 131-151 (IFFD…SPIL), 167-187 (LFVL…FNCI), and 213-233 (FSIF…VPFF).

This sequence belongs to the TIC214 family. As to quaternary structure, part of the Tic complex.

The protein resides in the plastid. Its subcellular location is the chloroplast inner membrane. Its function is as follows. Involved in protein precursor import into chloroplasts. May be part of an intermediate translocation complex acting as a protein-conducting channel at the inner envelope. The polypeptide is Protein TIC 214 (Physcomitrium patens (Spreading-leaved earth moss)).